We begin with the raw amino-acid sequence, 270 residues long: Non-structural maintenance of chromosomes element 1 homolog (270 aa).

The segment at 185-226 adopts an RING-type; atypical zinc-finger fold; sequence CNVCRKVAIQSQLCENCGIPLHLQCAGKYFHGKANPTCPNCN. The interval 236-270 is disordered; it reads LNQVSSQGPSHSQTETVRGRNQRSKNTSTASRTSR. Composition is skewed to polar residues over residues 237-251 and 259-270; these read NQVS…QTET and SKNTSTASRTSR.

Belongs to the NSE1 family. Component of the SMC5-SMC6 complex.

The protein localises to the nucleus. It localises to the chromosome. The protein resides in the telomere. The catalysed reaction is S-ubiquitinyl-[E2 ubiquitin-conjugating enzyme]-L-cysteine + [acceptor protein]-L-lysine = [E2 ubiquitin-conjugating enzyme]-L-cysteine + N(6)-ubiquitinyl-[acceptor protein]-L-lysine.. RING-type zinc finger-containing E3 ubiquitin ligase that assembles with melanoma antigen protein (MAGE) to catalyze the direct transfer of ubiquitin from E2 ubiquitin-conjugating enzyme to a specific substrate. Within MAGE-RING ubiquitin ligase complex, MAGE stimulates and specifies ubiquitin ligase activity likely through recruitment and/or stabilization of the E2 ubiquitin-conjugating enzyme at the E3:substrate complex. Involved in maintenance of genome integrity, DNA damage response and DNA repair. The chain is Non-structural maintenance of chromosomes element 1 homolog (nsmce1) from Xenopus laevis (African clawed frog).